Consider the following 245-residue polypeptide: Carboxymethylenebutenolidase homolog (245 aa).

An N-acetylalanine modification is found at A2. K36 is modified (N6-acetyllysine). Active-site residues include C132, D179, and H212. Residue S223 is modified to Phosphoserine.

The protein belongs to the dienelactone hydrolase family.

The protein resides in the cytoplasm. It is found in the cytosol. Its function is as follows. Cysteine hydrolase. The sequence is that of Carboxymethylenebutenolidase homolog (CMBL) from Pongo abelii (Sumatran orangutan).